Consider the following 421-residue polypeptide: Plant UBX domain-containing protein 5 (421 aa).

Residues 4–45 (ETNENLINSFIEITSSSREEANFFLESHTWNLDAAVSTFLDN) form the UBA domain. Disordered stretches follow at residues 46-171 (DAAA…MMVQ) and 292-338 (ENFT…PSRG). Polar residues predominate over residues 69 to 84 (QSPSQSHSPDYTPSET). Residues 85–102 (SPSPSRSRSASPSSRAAP) show a composition bias toward low complexity. The SEP domain maps to 231-295 (RIMHTITFWL…DLVRRGENFT (65 aa)). The segment covering 312–328 (GASGSGSSSAPQASSAP) has biased composition (low complexity). Residues 343–420 (PAAPTTSIQL…GIANAVVIQK (78 aa)) enclose the UBX domain.

Interacts with CDC48A (non-hexameric) via its UBX domain.

This is Plant UBX domain-containing protein 5 from Arabidopsis thaliana (Mouse-ear cress).